The primary structure comprises 378 residues: Atypical chemokine receptor 2 (378 aa).

The Extracellular portion of the chain corresponds to 1 to 49 (MPTVASPLPLTTVGSENSSSIYDYDYLDDMTILVCRKDEVLSFGRVFLP). N17 carries N-linked (GlcNAc...) asparagine glycosylation. The chain crosses the membrane as a helical span at residues 50–70 (VVYSLIFVLGLAGNLLLLVVL). Residues 71 to 91 (LHSAPRRRTMELYLLNLAVSN) are Cytoplasmic-facing. Residues 92-112 (LLFVVTMPFWAISVAWHWVFG) traverse the membrane as a helical segment. The Extracellular segment spans residues 113-117 (SFLCK). C116 and C194 form a disulfide bridge. The chain crosses the membrane as a helical span at residues 118–139 (VISTLYSINFYCGIFFITCMSL). Topologically, residues 140-161 (DKYLEIVHAQPLHRPKAQFRNL) are cytoplasmic. A helical transmembrane segment spans residues 162–182 (LLIVMVWITSLAISVPEMVFV). Residues 183–216 (QIHQTLDGVWHCYADFGGHATIWKLYLRFQLNLL) are Extracellular-facing. A helical membrane pass occupies residues 217–237 (GFLLPLLAMIFFYSRIGCVLV). At 238 to 249 (RLRPPGQGRALR) the chain is on the cytoplasmic side. Residues 250-270 (MAAALVIVFFMLWFPYNLTLF) traverse the membrane as a helical segment. Topologically, residues 271–292 (LHSLLDLHVFGNCEISHRLDYT) are extracellular. Residues 293–313 (LQVTESLAFSHCCFTPVLYAF) form a helical membrane-spanning segment. Residues 314 to 378 (CSHRFRRYLK…SLNKGEMGNT (65 aa)) lie on the Cytoplasmic side of the membrane. The C-terminal cytoplasmic tail stretch occupies residues 326–378 (LSVMLRWHQAPGTPSSNHSESSRVTAQEDVVSMNDLGERQSEDSLNKGEMGNT).

Belongs to the G-protein coupled receptor 1 family. Atypical chemokine receptor subfamily. In terms of processing, phosphorylated on serine residues in the C-terminal cytoplasmic tail. In terms of tissue distribution, expressed on apoptotic neutrophils (at protein level).

It localises to the early endosome. Its subcellular location is the recycling endosome. The protein localises to the cell membrane. Functionally, atypical chemokine receptor that controls chemokine levels and localization via high-affinity chemokine binding that is uncoupled from classic ligand-driven signal transduction cascades, resulting instead in chemokine sequestration, degradation, or transcytosis. Also known as interceptor (internalizing receptor) or chemokine-scavenging receptor or chemokine decoy receptor. Acts as a receptor for chemokines including CCL2, CCL3, CCL3L1, CCL4, CCL5, CCL7, CCL8, CCL11, CCL13, CCL17, CCL22, CCL23, CCL24, SCYA2/MCP-1, SCY3/MIP-1-alpha, SCYA5/RANTES and SCYA7/MCP-3. Upon active ligand stimulation, activates a beta-arrestin 1 (ARRB1)-dependent, G protein-independent signaling pathway that results in the phosphorylation of the actin-binding protein cofilin (CFL1) through a RAC1-PAK1-LIMK1 signaling pathway. Activation of this pathway results in up-regulation of ACKR2 from endosomal compartment to cell membrane, increasing its efficiency in chemokine uptake and degradation. By scavenging chemokines in tissues, on the surfaces of lymphatic vessels, and in placenta, plays an essential role in the resolution (termination) of the inflammatory response and in the regulation of adaptive immune responses. Plays a major role in the immune silencing of macrophages during the resolution of inflammation. Acts as a regulator of inflammatory leukocyte interactions with lymphatic endothelial cells (LECs) and is required for immature/mature dendritic cells discrimination by LECs. The chain is Atypical chemokine receptor 2 (Ackr2) from Mus musculus (Mouse).